The primary structure comprises 156 residues: Arginine repressor (156 aa).

This sequence belongs to the ArgR family.

Its subcellular location is the cytoplasm. Its pathway is amino-acid biosynthesis; L-arginine biosynthesis [regulation]. Functionally, regulates arginine biosynthesis genes. The chain is Arginine repressor from Vibrio vulnificus (strain CMCP6).